An 834-amino-acid polypeptide reads, in one-letter code: Probable glucan 1,3-beta-glucosidase D (834 aa).

The span at 1 to 33 (MPSHSRSRDRYGGRDSDREARYDYDYARRRYAT) shows a compositional bias: basic and acidic residues. Disordered stretches follow at residues 1–188 (MPSH…ASHL) and 200–251 (QYEK…TKAR). The Cytoplasmic segment spans residues 1–306 (MPSHSRSRDR…GGRPFWKRKK (306 aa)). Over residues 34 to 45 (DDNDDDYDDDEL) the composition is skewed to acidic residues. Basic and acidic residues-rich tracts occupy residues 46–76 (EHGLNERRYRRDGYLPPRESRTRGYYERDAE), 98–173 (YGHD…ETAA), 201–218 (YEKEERRKRENAKDAAKA), and 228–245 (VVGEESRALRDPPGESHR). Residues 307 to 327 (WIGLGALILILVIVIPVAVVV) form a helical; Signal-anchor for type II membrane protein membrane-spanning segment. Residues 328-834 (SKKHDNKSDP…PDFGNLPEYY (507 aa)) are Extracellular-facing. The disordered stretch occupies residues 331 to 354 (HDNKSDPADPQGTSPGKSNLDGLS). Asn333, Asn379, Asn384, Asn396, Asn549, Asn561, and Asn570 each carry an N-linked (GlcNAc...) asparagine glycan. Glu600 serves as the catalytic Proton donor. 3 N-linked (GlcNAc...) asparagine glycosylation sites follow: Asn639, Asn672, and Asn692. Glu705 functions as the Nucleophile in the catalytic mechanism.

It belongs to the glycosyl hydrolase 5 (cellulase A) family.

It is found in the cell membrane. It catalyses the reaction Successive hydrolysis of beta-D-glucose units from the non-reducing ends of (1-&gt;3)-beta-D-glucans, releasing alpha-glucose.. Its function is as follows. Glucosidase involved in the degradation of cellulosic biomass. Active on lichenan. In Neosartorya fischeri (strain ATCC 1020 / DSM 3700 / CBS 544.65 / FGSC A1164 / JCM 1740 / NRRL 181 / WB 181) (Aspergillus fischerianus), this protein is Probable glucan 1,3-beta-glucosidase D (exgD).